Here is a 506-residue protein sequence, read N- to C-terminus: Gallate 1-beta-glucosyltransferase 84A23 (506 aa).

The active-site Proton acceptor is His20. An an anthocyanidin-binding site is contributed by His20. Residues Gln345, His360, Trp363, Asn364, Ser365, and Glu368 each coordinate UDP-alpha-D-glucose. Residue Gly383 coordinates an anthocyanidin. Residues Asp384 and Gln385 each coordinate UDP-alpha-D-glucose.

The protein belongs to the UDP-glycosyltransferase family. As to expression, expressed in roots of the seedlings.

The protein resides in the cytoplasm. The catalysed reaction is 3,4,5-trihydroxybenzoate + UDP-alpha-D-glucose = 1-O-galloyl-beta-D-glucose + UDP. It carries out the reaction 3,4-dihydroxybenzoate + UDP-alpha-D-glucose = 1-O-(3,4-dihydroxy-benzoyl)-beta-D-glucose + UDP. It catalyses the reaction 4-hydroxybenzoate + UDP-alpha-D-glucose = 4-(beta-D-glucosyloxy)benzoate + UDP + H(+). The enzyme catalyses (E)-cinnamate + UDP-alpha-D-glucose = 1-O-(trans-cinnamoyl)-beta-D-glucose + UDP. The catalysed reaction is (E)-sinapate + UDP-alpha-D-glucose = 1-O-(trans-sinapoyl)-beta-D-glucose + UDP. It carries out the reaction (E)-4-coumarate + UDP-alpha-D-glucose = 1-O-(trans-4-coumaroyl)-beta-D-glucose + UDP. It catalyses the reaction (E)-caffeate + UDP-alpha-D-glucose = 1-O-[(E)-caffeoyl]-beta-D-glucose + UDP. The enzyme catalyses (E)-ferulate + UDP-alpha-D-glucose = 1-O-[(E)-feruloyl]-beta-D-glucose + UDP. The catalysed reaction is genistein + UDP-alpha-D-glucose = genistein 7-O-beta-D-glucoside + UDP + H(+). It carries out the reaction apigenin + UDP-alpha-D-glucose = apigenin 7-O-beta-D-glucoside + UDP + H(+). It catalyses the reaction luteolin + UDP-alpha-D-glucose = luteolin 7-O-beta-D-glucoside + UDP + H(+). In terms of biological role, glucosyltransferase that catalyzes the formation of 1-O-beta-D-glucose esters with hydroxybenzoic acids and cinnamic acid including its derivatives as preferred glucosyl acceptors. Has significant activity with gallic acid (3,4,5-trihydroxybenzoic acid), 3,4-dihydroxybenzoic acid, 4-hydroxybenzoic acid, cinnamic acid, sinapic acid, coumaric acid, caffeic acid and ferulic acid in vitro. Gallic acid is the predicted native substrate of the enzyme, which thus catalyzes the formation of 1-O-galloyl-beta-D-glucose, the first committed step of hydrolyzable tannins (HTs) biosynthesis, with punicalagin isomers being the major HTs of pomegranate. Catalyzes the formation of flavonoid glucosides with genistein, apigenin and luteolin in vitro. Has low activity with benzoic acid, 2-hydroxybenzoic acid, 3-hydroxybenzoic acid, 2,4-dihydroxybenzoic acid, naringenin and quercetin. No activity with catechol, resveratrol, chlorogenic acid, catechin and epicatechin (building blocks of proanthocyanidins) or cyanidin, delphinidin and pelargonidin (the three anthocyanidins). The sequence is that of Gallate 1-beta-glucosyltransferase 84A23 from Punica granatum (Pomegranate).